Here is a 534-residue protein sequence, read N- to C-terminus: BEN domain-containing protein 4 (534 aa).

Disordered regions lie at residues 1–24 (MEEEMQPAEEGPSVPKIYKQRSPY), 48–128 (ELPH…AASS), and 287–322 (VHTLGGWTSPATSESHGHPSSSTLPEEEEEEDEEGY). Pro residues predominate over residues 53 to 63 (RAPPPPPPPFA). Residues 69–83 (SISSSEPPPQQFQAQ) are compositionally biased toward polar residues. Residues 91-109 (GRAAAAASSSSPSCTPATS) are compositionally biased toward low complexity. Residues 295–310 (SPATSESHGHPSSSTL) are compositionally biased toward polar residues. Residues 311–321 (PEEEEEEDEEG) show a composition bias toward acidic residues. Residues 324 to 351 (PRCQELEQEVISLQQENEELRRKLESIP) adopt a coiled-coil conformation. Positions 390-498 (NYPVYITSKQ…DAVGHARQGR (109 aa)) constitute a BEN domain.

The polypeptide is BEN domain-containing protein 4 (BEND4) (Homo sapiens (Human)).